A 473-amino-acid polypeptide reads, in one-letter code: Pre-mRNA-splicing factor PRP46 (473 aa).

Polar residues predominate over residues 1–10 (MSTSLETPSG). Disordered regions lie at residues 1–21 (MSTS…VASG) and 103–126 (GPNV…QAVA). WD repeat units lie at residues 180 to 219 (GHMG…LKLS), 222 to 261 (GHIS…VIRH), 264 to 303 (GHFS…NIFT), 306 to 347 (GHTS…NTLT), 349 to 388 (HKKS…FVNN), 391 to 429 (GHEA…PFQH), and 440 to 473 (DAEA…SEQA).

This sequence belongs to the WD repeat PRL1/PRL2 family. In terms of assembly, associated with the spliceosome.

It localises to the cytoplasm. The protein resides in the nucleus. Its function is as follows. Involved in pre-mRNA splicing and required for cell cycle progression at G2/M. This Cryptococcus neoformans var. neoformans serotype D (strain JEC21 / ATCC MYA-565) (Filobasidiella neoformans) protein is Pre-mRNA-splicing factor PRP46 (PRP46).